The following is a 429-amino-acid chain: 3-phosphoshikimate 1-carboxyvinyltransferase (429 aa).

Positions 23, 24, and 28 each coordinate 3-phosphoshikimate. Position 23 (lysine 23) interacts with phosphoenolpyruvate. Phosphoenolpyruvate-binding residues include glycine 95 and arginine 123. 3-phosphoshikimate is bound by residues serine 168, glutamine 170, aspartate 316, and lysine 343. Position 170 (glutamine 170) interacts with phosphoenolpyruvate. Aspartate 316 functions as the Proton acceptor in the catalytic mechanism. Positions 347 and 389 each coordinate phosphoenolpyruvate.

The protein belongs to the EPSP synthase family. In terms of assembly, monomer.

The protein localises to the cytoplasm. The enzyme catalyses 3-phosphoshikimate + phosphoenolpyruvate = 5-O-(1-carboxyvinyl)-3-phosphoshikimate + phosphate. It functions in the pathway metabolic intermediate biosynthesis; chorismate biosynthesis; chorismate from D-erythrose 4-phosphate and phosphoenolpyruvate: step 6/7. Catalyzes the transfer of the enolpyruvyl moiety of phosphoenolpyruvate (PEP) to the 5-hydroxyl of shikimate-3-phosphate (S3P) to produce enolpyruvyl shikimate-3-phosphate and inorganic phosphate. This is 3-phosphoshikimate 1-carboxyvinyltransferase from Bacillus anthracis (strain A0248).